The sequence spans 429 residues: Phosphomethylpyrimidine synthase (429 aa).

Residues N66, M95, Y124, H163, 185-187 (SRG), 226-229 (DGLR), and E265 each bind substrate. H269 lines the Zn(2+) pocket. Y292 contributes to the substrate binding site. H333 contacts Zn(2+). C407, C410, and C414 together coordinate [4Fe-4S] cluster.

This sequence belongs to the ThiC family. Requires [4Fe-4S] cluster as cofactor.

The catalysed reaction is 5-amino-1-(5-phospho-beta-D-ribosyl)imidazole + S-adenosyl-L-methionine = 4-amino-2-methyl-5-(phosphooxymethyl)pyrimidine + CO + 5'-deoxyadenosine + formate + L-methionine + 3 H(+). Its pathway is cofactor biosynthesis; thiamine diphosphate biosynthesis. Functionally, catalyzes the synthesis of the hydroxymethylpyrimidine phosphate (HMP-P) moiety of thiamine from aminoimidazole ribotide (AIR) in a radical S-adenosyl-L-methionine (SAM)-dependent reaction. The chain is Phosphomethylpyrimidine synthase from Pyrococcus abyssi (strain GE5 / Orsay).